Consider the following 245-residue polypeptide: DNA repair protein RecO (245 aa).

It belongs to the RecO family.

Its function is as follows. Involved in DNA repair and RecF pathway recombination. The chain is DNA repair protein RecO from Porphyromonas gingivalis (strain ATCC BAA-308 / W83).